Reading from the N-terminus, the 612-residue chain is Elongation factor 4 (612 aa).

Residues 12–194 (SRIRNFSIIA…QIVEKVPAPA (183 aa)) enclose the tr-type G domain. GTP-binding positions include 24–29 (DHGKST) and 141–144 (NKID).

Belongs to the TRAFAC class translation factor GTPase superfamily. Classic translation factor GTPase family. LepA subfamily.

The protein resides in the cell membrane. It carries out the reaction GTP + H2O = GDP + phosphate + H(+). Its function is as follows. Required for accurate and efficient protein synthesis under certain stress conditions. May act as a fidelity factor of the translation reaction, by catalyzing a one-codon backward translocation of tRNAs on improperly translocated ribosomes. Back-translocation proceeds from a post-translocation (POST) complex to a pre-translocation (PRE) complex, thus giving elongation factor G a second chance to translocate the tRNAs correctly. Binds to ribosomes in a GTP-dependent manner. The sequence is that of Elongation factor 4 from Bacillus pumilus (strain SAFR-032).